The following is a 553-amino-acid chain: Arginine--tRNA ligase (553 aa).

Positions 122–132 (ANPTGFLHVGH) match the 'HIGH' region motif.

It belongs to the class-I aminoacyl-tRNA synthetase family. Monomer.

Its subcellular location is the cytoplasm. It catalyses the reaction tRNA(Arg) + L-arginine + ATP = L-arginyl-tRNA(Arg) + AMP + diphosphate. In Mesoplasma florum (strain ATCC 33453 / NBRC 100688 / NCTC 11704 / L1) (Acholeplasma florum), this protein is Arginine--tRNA ligase.